The primary structure comprises 838 residues: Lymphoid-specific helicase (838 aa).

A coiled-coil region spans residues 30–115; the sequence is MLEEEEQLEA…SLKVKKGKNS (86 aa). The span at 94-108 shows a compositional bias: basic and acidic residues; that stretch reads QKKKEKLERKKESLK. Positions 94–135 are disordered; the sequence is QKKKEKLERKKESLKVKKGKNSIDASEEKPVMRKKRGREDES. A Phosphoserine modification is found at S115. Residues 119-134 are compositionally biased toward basic and acidic residues; that stretch reads SEEKPVMRKKRGREDE. In terms of domain architecture, Helicase ATP-binding spans 235 to 403; the sequence is RMLWENGING…WSLLNFLLPD (169 aa). Position 248-255 (248-255) interacts with ATP; the sequence is DEMGLGKT. The short motif at 354 to 357 is the DEAH box element; the sequence is DEGH. 2 positions are modified to phosphoserine: S503 and S515. Positions 603 to 767 constitute a Helicase C-terminal domain; the sequence is ILDRMLPELK…GLNLSKNFLD (165 aa).

It belongs to the SNF2/RAD54 helicase family. As to expression, highly expressed in proliferative tissues such as adult thymus and testis, and expressed at lower levels in uterus, small intestine, colon, and peripheral blood mononuclear cells. Also expressed in neoplastic cell lines including those derived from myeloid and lymphoid leukemias.

It is found in the nucleus. In terms of biological role, plays an essential role in normal development and survival. Involved in regulation of the expansion or survival of lymphoid cells. Required for de novo or maintenance DNA methylation. May control silencing of the imprinted CDKN1C gene through DNA methylation. May play a role in formation and organization of heterochromatin, implying a functional role in the regulation of transcription and mitosis. This is Lymphoid-specific helicase from Homo sapiens (Human).